Consider the following 316-residue polypeptide: Taste receptor type 2 member 3 (316 aa).

Topologically, residues 1–7 (MFGFIEG) are extracellular. The chain crosses the membrane as a helical span at residues 8 to 28 (VFLVLTITEFILGNLVNGFIV). Over 29–50 (SINSSYWFKSKKISLSNFIITS) the chain is Cytoplasmic. The chain crosses the membrane as a helical span at residues 51 to 71 (LALFRIFLLWIIFIDSLIIVF). The Extracellular portion of the chain corresponds to 72–86 (SYQTHDSGIMMQLID). A helical transmembrane segment spans residues 87–107 (VFWTFTNHFSIWLISCLSVFY). Residues 108-128 (CLKIASFSHPSFLWLKWRASR) are Cytoplasmic-facing. A helical transmembrane segment spans residues 129–149 (VVVGMLWGALLLSCVSTMSLM). Residues 150-186 (NEFKIYSALTRSKDTPNMTEYIRLKRQEYNLMHVLGN) lie on the Extracellular side of the membrane. N-linked (GlcNAc...) asparagine glycosylation occurs at Asn166. A helical membrane pass occupies residues 187–207 (LWKIPSLIVSLVAYLLLLLSL). Residues 208 to 234 (GKHTQQMQQYSIDSRDQSAEAHKRAMR) lie on the Cytoplasmic side of the membrane. A helical membrane pass occupies residues 235-255 (IISSFLLFFLFYFLSFMILSS). Residues 256 to 266 (SRFLPETRIAR) lie on the Extracellular side of the membrane. Residues 267–287 (IIGVVISMSYLVGDSFILIVC) traverse the membrane as a helical segment. Topologically, residues 288-316 (NNKLKHTFVAMLPCECGHLKPGSKGPSAS) are cytoplasmic.

This sequence belongs to the G-protein coupled receptor T2R family.

It localises to the membrane. In terms of biological role, gustducin-coupled receptor implicated in the perception of bitter compounds in the oral cavity and the gastrointestinal tract. Signals through PLCB2 and the calcium-regulated cation channel TRPM5. This is Taste receptor type 2 member 3 (Tas2r3) from Mus musculus (Mouse).